A 739-amino-acid polypeptide reads, in one-letter code: Phosphoribosylformylglycinamidine synthase subunit PurL (739 aa).

The active site involves H54. The ATP site is built by Y57 and K96. E98 is a binding site for Mg(2+). Residues 99-102 (SHNH) and R121 each bind substrate. Residue H100 is the Proton acceptor of the active site. D122 contributes to the Mg(2+) binding site. Q245 contacts substrate. A Mg(2+)-binding site is contributed by D273. 317–319 (ESQ) is a binding site for substrate. ATP is bound by residues D500 and G537. N538 is a binding site for Mg(2+). S540 is a substrate binding site.

The protein belongs to the FGAMS family. Monomer. Part of the FGAM synthase complex composed of 1 PurL, 1 PurQ and 2 PurS subunits.

It localises to the cytoplasm. It carries out the reaction N(2)-formyl-N(1)-(5-phospho-beta-D-ribosyl)glycinamide + L-glutamine + ATP + H2O = 2-formamido-N(1)-(5-O-phospho-beta-D-ribosyl)acetamidine + L-glutamate + ADP + phosphate + H(+). It functions in the pathway purine metabolism; IMP biosynthesis via de novo pathway; 5-amino-1-(5-phospho-D-ribosyl)imidazole from N(2)-formyl-N(1)-(5-phospho-D-ribosyl)glycinamide: step 1/2. Part of the phosphoribosylformylglycinamidine synthase complex involved in the purines biosynthetic pathway. Catalyzes the ATP-dependent conversion of formylglycinamide ribonucleotide (FGAR) and glutamine to yield formylglycinamidine ribonucleotide (FGAM) and glutamate. The FGAM synthase complex is composed of three subunits. PurQ produces an ammonia molecule by converting glutamine to glutamate. PurL transfers the ammonia molecule to FGAR to form FGAM in an ATP-dependent manner. PurS interacts with PurQ and PurL and is thought to assist in the transfer of the ammonia molecule from PurQ to PurL. In Bacillus cereus (strain ZK / E33L), this protein is Phosphoribosylformylglycinamidine synthase subunit PurL.